The primary structure comprises 268 residues: tRNA pseudouridine synthase A (268 aa).

Asp63 functions as the Nucleophile in the catalytic mechanism. Tyr122 provides a ligand contact to substrate.

This sequence belongs to the tRNA pseudouridine synthase TruA family. As to quaternary structure, homodimer.

It carries out the reaction uridine(38/39/40) in tRNA = pseudouridine(38/39/40) in tRNA. Formation of pseudouridine at positions 38, 39 and 40 in the anticodon stem and loop of transfer RNAs. The polypeptide is tRNA pseudouridine synthase A (Treponema denticola (strain ATCC 35405 / DSM 14222 / CIP 103919 / JCM 8153 / KCTC 15104)).